The sequence spans 255 residues: Hydroxyacylglutathione hydrolase (255 aa).

Zn(2+)-binding residues include histidine 53, histidine 55, aspartate 57, histidine 58, histidine 110, aspartate 127, and histidine 165.

The protein belongs to the metallo-beta-lactamase superfamily. Glyoxalase II family. As to quaternary structure, monomer. Zn(2+) serves as cofactor.

The catalysed reaction is an S-(2-hydroxyacyl)glutathione + H2O = a 2-hydroxy carboxylate + glutathione + H(+). The protein operates within secondary metabolite metabolism; methylglyoxal degradation; (R)-lactate from methylglyoxal: step 2/2. Thiolesterase that catalyzes the hydrolysis of S-D-lactoyl-glutathione to form glutathione and D-lactic acid. This Xanthomonas axonopodis pv. citri (strain 306) protein is Hydroxyacylglutathione hydrolase.